The chain runs to 107 residues: C-X-C motif chemokine 2 (107 aa).

The signal sequence occupies residues 1 to 34 (MARATLSAAPSNPRLLRVALLLLLLVAASRRAAG). Cystine bridges form between cysteine 43-cysteine 69 and cysteine 45-cysteine 85.

Belongs to the intercrine alpha (chemokine CxC) family. The N-terminal processed form GRO-beta(5-73) is produced by proteolytic cleavage after secretion from bone marrow stromal cells.

The protein localises to the secreted. Produced by activated monocytes and neutrophils and expressed at sites of inflammation. Hematoregulatory chemokine, which, in vitro, suppresses hematopoietic progenitor cell proliferation. GRO-beta(5-73) shows a highly enhanced hematopoietic activity. The sequence is that of C-X-C motif chemokine 2 (CXCL2) from Homo sapiens (Human).